Reading from the N-terminus, the 603-residue chain is DNA mismatch repair protein MutL (603 aa).

Residues 361-383 (KETPTLFSKPTIPEYVPSDEDAP) are disordered.

It belongs to the DNA mismatch repair MutL/HexB family.

Its function is as follows. This protein is involved in the repair of mismatches in DNA. It is required for dam-dependent methyl-directed DNA mismatch repair. May act as a 'molecular matchmaker', a protein that promotes the formation of a stable complex between two or more DNA-binding proteins in an ATP-dependent manner without itself being part of a final effector complex. This Listeria monocytogenes serotype 4b (strain CLIP80459) protein is DNA mismatch repair protein MutL.